Here is a 232-residue protein sequence, read N- to C-terminus: Ubiquinone biosynthesis O-methyltransferase (232 aa).

S-adenosyl-L-methionine-binding residues include Arg-36, Gly-55, Asp-76, and Met-120.

It belongs to the methyltransferase superfamily. UbiG/COQ3 family.

It catalyses the reaction a 3-demethylubiquinol + S-adenosyl-L-methionine = a ubiquinol + S-adenosyl-L-homocysteine + H(+). It carries out the reaction a 3-(all-trans-polyprenyl)benzene-1,2-diol + S-adenosyl-L-methionine = a 2-methoxy-6-(all-trans-polyprenyl)phenol + S-adenosyl-L-homocysteine + H(+). The protein operates within cofactor biosynthesis; ubiquinone biosynthesis. Functionally, O-methyltransferase that catalyzes the 2 O-methylation steps in the ubiquinone biosynthetic pathway. This chain is Ubiquinone biosynthesis O-methyltransferase, found in Burkholderia orbicola (strain MC0-3).